The primary structure comprises 264 residues: Cell division protein FtsQ (264 aa).

Positions 1–24 (MAGPTTAERGARQQESSGPPRVRR) are disordered. At 1–32 (MAGPTTAERGARQQESSGPPRVRRFRPPRLRT) the chain is on the cytoplasmic side. The helical transmembrane segment at 33-53 (IIILAVALVLVAGGTVWVLYG) threads the bilayer. Over 54–264 (SNWTRLERVS…VATAPASSGS (211 aa)) the chain is Extracellular. Residues 57–126 (TRLERVSVSG…HGIGLKVTER (70 aa)) enclose the POTRA domain.

This sequence belongs to the FtsQ/DivIB family. FtsQ subfamily.

Its subcellular location is the cell membrane. Essential cell division protein. This chain is Cell division protein FtsQ, found in Streptomyces coelicolor (strain ATCC BAA-471 / A3(2) / M145).